A 395-amino-acid polypeptide reads, in one-letter code: E3 ubiquitin-protein ligase RDUF1 (395 aa).

Disordered stretches follow at residues 1-22 and 107-130; these read MMPN…TTTT and PVIV…EGDG. A compositionally biased stretch (low complexity) spans 9 to 22; the sequence is TITPTTESTTTTTT. The span at 121–130 shows a compositional bias: basic and acidic residues; the sequence is ERVENEEGDG. The RING-type; atypical zinc finger occupies 215 to 256; sequence CAVCTEVFEAGIEGREMPCKHIFHGDCIVPWLSIRNSCPVCR.

As to expression, expressed in root tips, leaf tips, junction of carpels and pedicels, stigma, anthers, pollen, vasculature of sepals and petals, immature seeds and embryos.

It localises to the cytoplasm. Its subcellular location is the cytosol. It is found in the nucleus. It carries out the reaction S-ubiquitinyl-[E2 ubiquitin-conjugating enzyme]-L-cysteine + [acceptor protein]-L-lysine = [E2 ubiquitin-conjugating enzyme]-L-cysteine + N(6)-ubiquitinyl-[acceptor protein]-L-lysine.. It functions in the pathway protein modification; protein ubiquitination. Functionally, E3 ubiquitin-protein ligase involved in the positive regulation of abscisic acid-dependent drought stress responses. Involved in the positive regulation of responses to salt and osmotic stresses during seed germination and early seedling development. Possesses E3 ubiquitin ligase activity in vitro. This Arabidopsis thaliana (Mouse-ear cress) protein is E3 ubiquitin-protein ligase RDUF1.